The primary structure comprises 713 residues: UvrABC system protein B (713 aa).

In terms of domain architecture, Helicase ATP-binding spans 35–421; it reads RRIRAGEKDV…GDGFVEQIIR (387 aa). 48–55 is a binding site for ATP; the sequence is GATGTGKS. The short motif at 101 to 124 is the Beta-hairpin element; sequence YYDYYQPEAYVPQSDTYIEKDSSI. In terms of domain architecture, Helicase C-terminal spans 438 to 604; the sequence is QIDDLVHEIR…PLRKKINDIV (167 aa). Residues 624 to 663 are disordered; it reads QAKDGKGAKAPVPSLGGKAAAKGAKSAKGKAKETVPTDRP. Low complexity predominate over residues 639–649; it reads GGKAAAKGAKS. Over residues 653 to 663 the composition is skewed to basic and acidic residues; that stretch reads KAKETVPTDRP. A UVR domain is found at 668-703; sequence AEEIEELTNRMRAAAADLQFEIAARLRDEVSEMKKE.

The protein belongs to the UvrB family. As to quaternary structure, forms a heterotetramer with UvrA during the search for lesions. Interacts with UvrC in an incision complex.

Its subcellular location is the cytoplasm. Its function is as follows. The UvrABC repair system catalyzes the recognition and processing of DNA lesions. A damage recognition complex composed of 2 UvrA and 2 UvrB subunits scans DNA for abnormalities. Upon binding of the UvrA(2)B(2) complex to a putative damaged site, the DNA wraps around one UvrB monomer. DNA wrap is dependent on ATP binding by UvrB and probably causes local melting of the DNA helix, facilitating insertion of UvrB beta-hairpin between the DNA strands. Then UvrB probes one DNA strand for the presence of a lesion. If a lesion is found the UvrA subunits dissociate and the UvrB-DNA preincision complex is formed. This complex is subsequently bound by UvrC and the second UvrB is released. If no lesion is found, the DNA wraps around the other UvrB subunit that will check the other stand for damage. The polypeptide is UvrABC system protein B (Streptomyces avermitilis (strain ATCC 31267 / DSM 46492 / JCM 5070 / NBRC 14893 / NCIMB 12804 / NRRL 8165 / MA-4680)).